The primary structure comprises 165 residues: Regulator of ribonuclease activity A (165 aa).

This sequence belongs to the RraA family. In terms of assembly, homotrimer. Binds to both RNA-binding sites in the C-terminal region of Rne and to RhlB.

The protein resides in the cytoplasm. Globally modulates RNA abundance by binding to RNase E (Rne) and regulating its endonucleolytic activity. Can modulate Rne action in a substrate-dependent manner by altering the composition of the degradosome. Modulates RNA-binding and helicase activities of the degradosome. In Actinobacillus pleuropneumoniae serotype 5b (strain L20), this protein is Regulator of ribonuclease activity A.